A 625-amino-acid chain; its full sequence is Interleukin-1 receptor-associated kinase-like 2 (625 aa).

The region spanning 13-94 is the Death domain; that stretch reads LDDPCRNMDA…RAAQIILNWK (82 aa). Positions 111 to 181 are disordered; that stretch reads KPEKPLAASV…SSDSKDFSTS (71 aa). A Phosphoserine modification is found at Ser144. Residues 169–181 are compositionally biased toward polar residues; sequence LPTSSDSKDFSTS. The 294-residue stretch at 210–503 folds into the Protein kinase domain; sequence FNQNHKISQG…GSVAAVEEWL (294 aa). ATP is bound by residues 216 to 224, Lys237, and 337 to 340; these read ISQGTFADV and KSSN. The disordered stretch occupies residues 513–539; the sequence is SGLSEGTGSSSNTPEETDDVDNSSLDA. Over residues 516–526 the composition is skewed to polar residues; sequence SEGTGSSSNTP.

Belongs to the protein kinase superfamily. TKL Ser/Thr protein kinase family. Pelle subfamily. In terms of assembly, interacts with MYD88. IL-1 stimulation leads to the formation of a signaling complex which dissociates from the IL-1 receptor following the binding of PELI1.

Functionally, binds to the IL-1 type I receptor following IL-1 engagement, triggering intracellular signaling cascades leading to transcriptional up-regulation and mRNA stabilization. The protein is Interleukin-1 receptor-associated kinase-like 2 (IRAK2) of Pongo abelii (Sumatran orangutan).